The primary structure comprises 328 residues: P2Y purinoceptor 3 (328 aa).

Residues 1–22 lie on the Extracellular side of the membrane; it reads MSMANFTGGRNSCTFHEEFKQV. N-linked (GlcNAc...) asparagine glycosylation is present at Asn5. Residues 23-43 form a helical membrane-spanning segment; sequence LLPLVYSVVFLLGLPLNAVVI. Topologically, residues 44-57 are cytoplasmic; sequence GQIWLARKALTRTT. The chain crosses the membrane as a helical span at residues 58–78; sequence IYMLNLAMADLLYVCSLPLLI. The Extracellular segment spans residues 79–96; that stretch reads YNYTQKDYWPFGDFTCKF. Residues Cys94 and Cys172 are joined by a disulfide bond. The chain crosses the membrane as a helical span at residues 97–117; sequence VRFQFYTNLHGSILFLTCISV. Over 118 to 139 the chain is Cytoplasmic; sequence QRYMGICHPLASWHKKKGKKLT. Residues 140-160 traverse the membrane as a helical segment; that stretch reads WLVCAAVWFIVIAQCLPTFVF. Residues 161-189 lie on the Extracellular side of the membrane; that stretch reads ASTGTQRNRTVCYDLSPPDRSTSYFPYGI. A helical transmembrane segment spans residues 190-210; the sequence is TLTITGFLLPFAAILACYCSM. Residues 211–231 are Cytoplasmic-facing; it reads ARILCQKDELIGLAVHKKKDK. A helical transmembrane segment spans residues 232 to 252; that stretch reads AVRMIIIVVIVFSISFFPFHL. Residues 253–275 are Extracellular-facing; the sequence is TKTIYLIVRSSASLPCPTLQAFA. A helical membrane pass occupies residues 276–298; that stretch reads IAYKCTRPFASMNSVLDPILFYF. Topologically, residues 299 to 323 are cytoplasmic; the sequence is TQRKFRESTRYLLDKMSSKWRQDHC.

It belongs to the G-protein coupled receptor 1 family.

The protein resides in the cell membrane. Its function is as follows. Receptor for extracellular ADP &gt; UTP &gt; ATP = UDP. The activity of this receptor is mediated by G proteins which activate a phosphatidylinositol-calcium second messenger system. The chain is P2Y purinoceptor 3 (P2RY3) from Gallus gallus (Chicken).